We begin with the raw amino-acid sequence, 166 residues long: Regulator of ribonuclease activity A (166 aa).

Belongs to the RraA family. In terms of assembly, homotrimer. Binds to both RNA-binding sites in the C-terminal region of Rne and to RhlB.

It is found in the cytoplasm. Its function is as follows. Globally modulates RNA abundance by binding to RNase E (Rne) and regulating its endonucleolytic activity. Can modulate Rne action in a substrate-dependent manner by altering the composition of the degradosome. Modulates RNA-binding and helicase activities of the degradosome. The polypeptide is Regulator of ribonuclease activity A (Histophilus somni (strain 2336) (Haemophilus somnus)).